A 232-amino-acid polypeptide reads, in one-letter code: Uracil phosphoribosyltransferase (232 aa).

38–42 (KGLVK) is a GTP binding site. Residues Arg-87, Arg-112, and 140-148 (DPMIATGST) each bind 5-phospho-alpha-D-ribose 1-diphosphate. Residues Ile-204 and 209-211 (GDA) contribute to the uracil site. Residue Asp-210 coordinates 5-phospho-alpha-D-ribose 1-diphosphate.

It belongs to the UPRTase family. Requires Mg(2+) as cofactor.

The enzyme catalyses UMP + diphosphate = 5-phospho-alpha-D-ribose 1-diphosphate + uracil. Its pathway is pyrimidine metabolism; UMP biosynthesis via salvage pathway; UMP from uracil: step 1/1. Its activity is regulated as follows. Allosterically activated by GTP. Catalyzes the conversion of uracil and 5-phospho-alpha-D-ribose 1-diphosphate (PRPP) to UMP and diphosphate. The chain is Uracil phosphoribosyltransferase from Thermococcus sibiricus (strain DSM 12597 / MM 739).